A 5054-amino-acid polypeptide reads, in one-letter code: Malformin synthetase mlfA (5054 aa).

The interval 194 to 585 (ERRAANRPHS…CGRADTQVKL (392 aa)) is adenylation 1. A Carrier 1 domain is found at 723 to 799 (LGLSQLEQEI…EASSLAEVQE (77 aa)). Position 760 is an O-(pantetheine 4'-phosphoryl)serine (serine 760). The segment at 837 to 1268 (EDVFPCTTMQ…ALNTLTLLQA (432 aa)) is condensation 1. Positions 1296 to 1685 (DRWVTRQPES…GRKDTQVKLR (390 aa)) are adenylation 2. In terms of domain architecture, Carrier 2 spans 1823–1900 (TASSKLELTL…QLAAILGEAT (78 aa)). At serine 1860 the chain carries O-(pantetheine 4'-phosphoryl)serine. Disordered stretches follow at residues 1899–1929 (ATGQ…NDGV) and 1964–1994 (GSSS…VSPV). 2 stretches are compositionally biased toward low complexity: residues 1904-1927 (ESSA…STND) and 1965-1981 (SSSC…SSSS). The segment at 2033-2448 (EDIYPATALQ…GVSYRDKQTL (416 aa)) is condensation 2. The segment at 2471–2863 (VRTPHAPAVF…IGRRDGQLKL (393 aa)) is adenylation 3. Residues 2999–3075 (RPATAQEREM…QLMRHLSANG (77 aa)) enclose the Carrier 3 domain. The residue at position 3036 (serine 3036) is an O-(pantetheine 4'-phosphoryl)serine. Condensation regions lie at residues 3092 to 3557 (WVPL…TYDQ) and 3578 to 3997 (DIYP…EQLV). An adenylation 4 region spans residues 4022–4412 (HSSREAACAW…VGRKDNQIKF (391 aa)). The Carrier 4 domain occupies 4546-4622 (MPFTAAECKM…DLAYRTANLV (77 aa)). Position 4583 is an O-(pantetheine 4'-phosphoryl)serine (serine 4583). The condensation 5 stretch occupies residues 4659-4972 (EVLPTTSFQR…LQTIVQHQNN (314 aa)).

Belongs to the NRP synthetase family.

The protein operates within secondary metabolite biosynthesis. Its function is as follows. Nonribosomal peptide synthetase; part of the gene cluster that mediates the biosynthesis of malformins, cyclic pentapeptides with a disulfide bond between 2 consecutive cysteins, that show potential anti-tumor as well as antimalarial and antitrypanosomal properties. The nonribosomal peptide synthetase mlfA is responsible of the formation of the cyclic pentapeptide. The malformin biosynthesis clusters in malformin-producing fungi also contain enzymes involved in the formation of the disulfide bond between the two consecutive cysteins within malformins, in addition to additional tailoring enzymes such as methyltransferases or oxidoreductases. They are also composed of up to 4 major facilitator superfamily transporters, and transcription factors probably involved in the regulation of the expression of those clusters. In Aspergillus niger (strain ATCC MYA-4892 / CBS 513.88 / FGSC A1513), this protein is Malformin synthetase mlfA.